The chain runs to 467 residues: Light-independent protochlorophyllide reductase subunit N (467 aa).

[4Fe-4S] cluster-binding residues include C23, C48, and C108.

This sequence belongs to the BchN/ChlN family. Protochlorophyllide reductase is composed of three subunits; ChlL, ChlN and ChlB. Forms a heterotetramer of two ChlB and two ChlN subunits. Requires [4Fe-4S] cluster as cofactor.

The enzyme catalyses chlorophyllide a + oxidized 2[4Fe-4S]-[ferredoxin] + 2 ADP + 2 phosphate = protochlorophyllide a + reduced 2[4Fe-4S]-[ferredoxin] + 2 ATP + 2 H2O. It participates in porphyrin-containing compound metabolism; chlorophyll biosynthesis (light-independent). Functionally, component of the dark-operative protochlorophyllide reductase (DPOR) that uses Mg-ATP and reduced ferredoxin to reduce ring D of protochlorophyllide (Pchlide) to form chlorophyllide a (Chlide). This reaction is light-independent. The NB-protein (ChlN-ChlB) is the catalytic component of the complex. This Nostoc sp. (strain PCC 7120 / SAG 25.82 / UTEX 2576) protein is Light-independent protochlorophyllide reductase subunit N.